We begin with the raw amino-acid sequence, 346 residues long: Signal recognition particle receptor FtsY (346 aa).

Residues 143 to 150 (GVNGVGKT), 225 to 229 (DTSGR), and 289 to 292 (TKMD) each bind GTP.

The protein belongs to the GTP-binding SRP family. FtsY subfamily. In terms of assembly, part of the signal recognition particle protein translocation system, which is composed of SRP and FtsY.

The protein resides in the cell membrane. It is found in the cytoplasm. The catalysed reaction is GTP + H2O = GDP + phosphate + H(+). Involved in targeting and insertion of nascent membrane proteins into the cytoplasmic membrane. Acts as a receptor for the complex formed by the signal recognition particle (SRP) and the ribosome-nascent chain (RNC). In Mycoplasma genitalium (strain ATCC 33530 / DSM 19775 / NCTC 10195 / G37) (Mycoplasmoides genitalium), this protein is Signal recognition particle receptor FtsY.